A 495-amino-acid chain; its full sequence is Vacuolar-processing enzyme (495 aa).

Residues 1–32 form the signal peptide; it reads MALDRSIISKTTWYSVVLWMMVVLVRVHGAAA. Asn138 is a glycosylation site (N-linked (GlcNAc...) asparagine). Residue His178 is part of the active site. The active-site Nucleophile is Cys220. Residues Cys253 and Cys267 are joined by a disulfide bond. N-linked (GlcNAc...) asparagine glycosylation is found at Asn320 and Asn376. 2 disulfides stabilise this stretch: Cys431–Cys461 and Cys443–Cys478.

Belongs to the peptidase C13 family.

Functionally, asparagine-specific endopeptidase involved in the processing of vacuolar seed protein precursors into the mature forms. This is Vacuolar-processing enzyme from Glycine max (Soybean).